A 97-amino-acid chain; its full sequence is Na(+)/H(+) antiporter subunit F1 (97 aa).

The next 3 membrane-spanning stretches (helical) occupy residues 3–23, 35–55, and 60–80; these read FKIF…AMLI, VVAL…FSIL, and YMLV…AVFS.

This sequence belongs to the CPA3 antiporters (TC 2.A.63) subunit F family. May form a heterooligomeric complex that consists of seven subunits: mnhA1, mnhB1, mnhC1, mnhD1, mnhE1, mnhF1 and mnhG1.

It is found in the cell membrane. Functionally, mnh complex is a Na(+)/H(+) antiporter involved in Na(+) excretion. The protein is Na(+)/H(+) antiporter subunit F1 (mnhF1) of Staphylococcus epidermidis (strain ATCC 35984 / DSM 28319 / BCRC 17069 / CCUG 31568 / BM 3577 / RP62A).